Consider the following 500-residue polypeptide: Na(+)/H(+) antiporter NhaB (500 aa).

The next 12 helical transmembrane spans lie at 28 to 50 (FLLLNPLLLWLAGPVTSAWVLVG), 68 to 88 (GGLLVLEALLLGLATPEALYA), 98 to 118 (LLLMFMVAGIYFMKDLLLLLF), 121 to 141 (LLLGVRSKTLLSLLFCLLAAL), 145 to 165 (FLDALTVTAVVISVAVAFFAV), 205 to 225 (LLMHAAVGTALGGVCTLVGEP), 244 to 264 (QVAPVSMPVLAAGLLTCVLLE), 311 to 331 (VLIVGLALHVAEVGLIGLLVI), 350 to 370 (FQEALPFTALLVVFFAVVAVI), 394 to 414 (MLFIANGLLSAISDNVFVATI), 449 to 469 (VATPNGQAAFLFLLTSSIAPL), and 477 to 497 (MVWMALPYTLVMGGLGWWAVS).

This sequence belongs to the NhaB Na(+)/H(+) (TC 2.A.34) antiporter family.

It localises to the cell inner membrane. The enzyme catalyses 2 Na(+)(in) + 3 H(+)(out) = 2 Na(+)(out) + 3 H(+)(in). In terms of biological role, na(+)/H(+) antiporter that extrudes sodium in exchange for external protons. The sequence is that of Na(+)/H(+) antiporter NhaB from Pseudomonas aeruginosa (strain LESB58).